The chain runs to 404 residues: MQMGDTVFMFFCALLVWLMTPGLALFYGGMVKSKNVLSTAMHSFSSIAIVSIVWVLFGYTLAFAPGNSIIGGLEWAGLKGVGFDPGDYSDTIPHSLFMMFQMTFAVLTTAIISGAFAERMRFGAFLLFSVLWASLVYTPVAHWVWGGGWIGQLGALDFAGGNVVHISSGVAGLVLAIVLGKRKDGTASSPHNLIYTFLGGALIWFGWFGFNVGSALTLDGVAMYAFINTNTAAAAGIAGWILVEWIINKKPTMLGAVSGAIAGLVAITPAAGFVTPFASIIIGIIGGAVCFWGVFSLKKKFGYDDALDAFGLHGIGGTWGGIATGLFATTSVNSAGADGLFYGDASLIWKQIVAIAATYVFVFIVTFVIIKIVSLFLPLRATEEEESLGLDLTMHGEKAYQDSM.

Helical transmembrane passes span 7–27, 44–64, 96–116, 125–145, 158–178, 227–247, 254–274, 277–297, and 352–372; these read VFMF…ALFY, FSSI…LAFA, LFMM…SGAF, FLLF…HWVW, FAGG…LAIV, INTN…EWII, LGAV…AGFV, FASI…VFSL, and IVAI…IIKI.

Belongs to the ammonia transporter channel (TC 1.A.11.2) family. As to quaternary structure, interacts with NrgB for a correct localization of the latter. GlnK-AmtB complex interacts with TnrA.

The protein resides in the cell membrane. Functionally, functions as an ammonium and methylammonium transporter in the absence of glutamine. Required for ammonium utilization at low concentrations or at low pH values, when ammonium is the single nitrogen source. Required for binding of NrgB to the membrane. Interaction between GlnK-AmtB complex and TnrA protects TnrA from proteolytic degradation. This Bacillus subtilis (strain 168) protein is Ammonium transporter.